The primary structure comprises 421 residues: Synaptotagmin-12 (421 aa).

The Vesicular portion of the chain corresponds to methionine 1 to glycine 18. Residues tryptophan 19 to leucine 39 form a helical membrane-spanning segment. Over tryptophan 40–asparagine 421 the chain is Cytoplasmic. Phosphoserine occurs at positions 97, 99, and 214. C2 domains are found at residues threonine 152–leucine 272 and alanine 283–histidine 416.

The protein belongs to the synaptotagmin family. Homodimer. Can also form heterodimers. Interacts with SYT1. In terms of processing, phosphorylation of Ser-97 is required for mossy-fiber long-term potentiation.

It localises to the cytoplasmic vesicle. It is found in the secretory vesicle. The protein resides in the synaptic vesicle membrane. Functionally, synaptic vesicle phosphoprotein that enhances spontaneous neurotransmitter release but does not effect induced neurotransmitter release. Unlike other synaptotagmins, it does not bind Ca(2+) or phospholipids. Essential for mossy-fiber long-term potentiation in the hippocampus. In Homo sapiens (Human), this protein is Synaptotagmin-12 (SYT12).